The sequence spans 519 residues: Galactose-1-phosphate uridylyltransferase (519 aa).

This sequence belongs to the galactose-1-phosphate uridylyltransferase type 2 family.

It localises to the cytoplasm. The catalysed reaction is alpha-D-galactose 1-phosphate + UDP-alpha-D-glucose = alpha-D-glucose 1-phosphate + UDP-alpha-D-galactose. It functions in the pathway carbohydrate metabolism; galactose metabolism. The protein is Galactose-1-phosphate uridylyltransferase of Caldanaerobacter subterraneus subsp. tengcongensis (strain DSM 15242 / JCM 11007 / NBRC 100824 / MB4) (Thermoanaerobacter tengcongensis).